Consider the following 339-residue polypeptide: MTDIERFIEKLPKAELHLHLEGTLEAELKLKLSHRNKIPLKQSSIEEIKESYNFHDLASFLEVYYEGVELLLHEQDFYDLCYQYLRKAASQNVVYAEMFFDPQLHTRRGISFETVIKGLIRARDDAMRDFHIYSQLIMCFIREMSFENAEETLNASLPYKSEIIGIGLDSNEENNPPIKFLKVFQRARQLGYRLTCHCDLHQKNTTTHIRQALEDIGVERIDHGINILDDPELIKLALERNIPFTVCPFSNEIVYPGKAQPEIRIMLDTGLKVTINSDDPAYMHCFYITENFNLAQKGASLTKKELVQICRNSFEAAWISEEKRNHYLEALNSFASAYD.

Residues His-17, His-19, His-197, and Asp-278 each coordinate Zn(2+). Residue Asp-279 coordinates substrate.

Belongs to the metallo-dependent hydrolases superfamily. Adenosine and AMP deaminases family. Adenine deaminase type 2 subfamily. It depends on Zn(2+) as a cofactor.

It is found in the cytoplasm. It localises to the nucleus. This is an uncharacterized protein from Schizosaccharomyces pombe (strain 972 / ATCC 24843) (Fission yeast).